The primary structure comprises 1134 residues: MSYHNPPIPWRELEGRISGRPAPHGHQESHADQVGYRHVRKPFDRHPVRPEGPVVPYAELHCHSSYSFLDGASNPEDLVIRAVELGLSGLALTDHDGLYGVVRMAEAAEACGLSTIIGSELSIGVPEPQNGVADPVGSHLLVLANGPEGYRRLAEALTDAYLVEGGRKGRPVHDLDHLAEVADGHWTVLTGCRKGAVRQGLVKGMLQAEAELRRLVDLFGIDNVLVELTDHRAPTDSRDNDLLAELASRHSLLTVATTAAHYAGAEQFELACALSAVRARRSLDEMDGWLPPGPVARLRSGAEMADLFSRHRDAVDNTVAVAERTAFHLKSVRPRLPDQKVPDGHTPISWLRHLVEEGRRACYGDDPVAKDRLATELDLIEDRGFAGYFLIVSDIVEFAQSQGILCQGRGSAAASAVCYVLGITVVDPVFYGLPFERFLSVLREEEPDIDVDFDARRREEVIQYVYAKYGRRNAAQVADVITYRPRSAVRDMAKALGYSQGQQDAWSRQMERRSVPPLPHDPDGPEIPDDVTTLAQQVMGLPRHLGIHSAGMVLTREPVGRICPIEPARMFGRTVLQWDKEDCAWMGLVKFDLLGLGMLSALSISFDLISQHCGRFWTLASIPRNEPGVYDMLCRGDSIGVFQVESRAQIGALPRLKPRCFYDLAVEIGLIRPGPVQGGAVHPYIRRRTGVEPVTYPHPLLEPVLERTLGIPLFQEQLMQMATTVGNCTAADADLLRRAMGSKRGVERIDSLRTKLFEGMAANGIDDDTAQGIYARIESFANFGFAESHALSFAGLVYTSAWIKLHYPAVFLAALLRSQPMGFYSSATLVADARRHGVVTRRPDVARSSVGADLELLDACCEELGSEELETGIDECLHDHDESEIGAFDPNRDDGDHRRDTHFAVRLGLSDVSGINIETATRIVEERERESFASLDDLARRVDLSGEEVEALALAGAFDDLVGSRRGALWQIGQINGVAPGQLDVQVVTQPPLLPEPTQMELLGDDLRATGISTADHPVRQVRDALNRRGVVQVDRLDGVETRRRIEVAGVVTHRQRPGTAGGVTFLNLEDETGLLNVIVTPGAWRHYRRVARTSRALVVRGILERGDEGVMSLQADRLEALDLSVPTKSRDFR.

The disordered stretch occupies residues Met-1–Gln-33.

This sequence belongs to the DNA polymerase type-C family. DnaE2 subfamily.

It localises to the cytoplasm. The catalysed reaction is DNA(n) + a 2'-deoxyribonucleoside 5'-triphosphate = DNA(n+1) + diphosphate. Its function is as follows. DNA polymerase involved in damage-induced mutagenesis and translesion synthesis (TLS). It is not the major replicative DNA polymerase. In Cutibacterium acnes (strain DSM 16379 / KPA171202) (Propionibacterium acnes), this protein is Error-prone DNA polymerase.